Reading from the N-terminus, the 232-residue chain is dTTP/UTP pyrophosphatase (232 aa).

The active-site Proton acceptor is Asp-103.

Belongs to the Maf family. YhdE subfamily. It depends on a divalent metal cation as a cofactor.

The protein localises to the cytoplasm. It carries out the reaction dTTP + H2O = dTMP + diphosphate + H(+). It catalyses the reaction UTP + H2O = UMP + diphosphate + H(+). The catalysed reaction is 5-methyl-UTP + H2O = 5-methyl-UMP + diphosphate + H(+). The enzyme catalyses psi-UTP + H2O = psi-UMP + diphosphate + H(+). Its function is as follows. Nucleoside triphosphate pyrophosphatase that hydrolyzes dTTP and UTP. Can also hydrolyze the modified nucleotides 5-methyl-UTP (m(5)UTP) and pseudo-UTP. Has weak activity with CTP. May have a dual role in cell division arrest and in preventing the incorporation of modified nucleotides into cellular nucleic acids. The sequence is that of dTTP/UTP pyrophosphatase from Saccharomyces cerevisiae (strain ATCC 204508 / S288c) (Baker's yeast).